Here is a 1331-residue protein sequence, read N- to C-terminus: Beta-mannanase/endoglucanase A (1331 aa).

The first 41 residues, 1–41 (MRLKTKIRKKWLSVLCTVVFLLNILFIANVTILPKVGAATS), serve as a signal peptide directing secretion. The tract at residues 42-325 (NDGVVKIDTS…YKTNAIGTSS (284 aa)) is catalytic (mannanase). Catalysis depends on Glu162, which acts as the Proton donor. The Nucleophile role is filled by Glu257. Disordered stretches follow at residues 319 to 363 (NAIG…TPAT), 515 to 566 (PSGA…TPAT), and 717 to 780 (EPSG…PLPT). Low complexity predominate over residues 323 to 335 (TSSTPTPTSTVTP). In terms of domain architecture, CBM3 1 spans 363-516 (TSGQIKVLYA…GVLVWGQEPS (154 aa)). 2 stretches are compositionally biased toward pro residues: residues 521 to 541 (APAP…PTVT) and 551 to 561 (TPTPTPTPTPV). One can recognise a CBM3 2 domain in the interval 566–719 (TGGQIKVLYA…GVLVWGQEPS (154 aa)). Positions 721-735 (TTPSPTSTPTVTVTP) are enriched in low complexity. 2 stretches are compositionally biased toward pro residues: residues 736 to 756 (TPTP…PTVT) and 766 to 780 (TPTP…PLPT). Positions 781–1331 (ISPSPSVVEI…RNLVFMRALV (551 aa)) are catalytic (endoglucanase).

In the N-terminal section; belongs to the glycosyl hydrolase 5 (cellulase A) family. The protein in the C-terminal section; belongs to the glycosyl hydrolase 44 (cellulase J) family.

The enzyme catalyses Random hydrolysis of (1-&gt;4)-beta-D-mannosidic linkages in mannans, galactomannans and glucomannans.. The catalysed reaction is Endohydrolysis of (1-&gt;4)-beta-D-glucosidic linkages in cellulose, lichenin and cereal beta-D-glucans.. Its function is as follows. Degradation of hemicelluloses, the second most abundant polysaccharides in nature. Contains two catalytic domains with mannanase and endoglucanase activities. In Caldicellulosiruptor saccharolyticus (Caldocellum saccharolyticum), this protein is Beta-mannanase/endoglucanase A (manA).